A 323-amino-acid polypeptide reads, in one-letter code: Lipoyl synthase (323 aa).

Cys-53, Cys-58, Cys-64, Cys-79, Cys-83, Cys-86, and Ser-293 together coordinate [4Fe-4S] cluster. Positions Trp-65–Ser-282 constitute a Radical SAM core domain.

The protein belongs to the radical SAM superfamily. Lipoyl synthase family. Requires [4Fe-4S] cluster as cofactor.

It is found in the cytoplasm. It catalyses the reaction [[Fe-S] cluster scaffold protein carrying a second [4Fe-4S](2+) cluster] + N(6)-octanoyl-L-lysyl-[protein] + 2 oxidized [2Fe-2S]-[ferredoxin] + 2 S-adenosyl-L-methionine + 4 H(+) = [[Fe-S] cluster scaffold protein] + N(6)-[(R)-dihydrolipoyl]-L-lysyl-[protein] + 4 Fe(3+) + 2 hydrogen sulfide + 2 5'-deoxyadenosine + 2 L-methionine + 2 reduced [2Fe-2S]-[ferredoxin]. The protein operates within protein modification; protein lipoylation via endogenous pathway; protein N(6)-(lipoyl)lysine from octanoyl-[acyl-carrier-protein]: step 2/2. In terms of biological role, catalyzes the radical-mediated insertion of two sulfur atoms into the C-6 and C-8 positions of the octanoyl moiety bound to the lipoyl domains of lipoate-dependent enzymes, thereby converting the octanoylated domains into lipoylated derivatives. The protein is Lipoyl synthase of Zymomonas mobilis subsp. mobilis (strain ATCC 31821 / ZM4 / CP4).